The chain runs to 426 residues: Chaperone SurA (426 aa).

The first 13 residues, 1–13 (MLGALFLGTAANA), serve as a signal peptide directing secretion. PpiC domains follow at residues 164–265 (SEEL…KLLE) and 274–373 (RDEV…EVLG).

It localises to the periplasm. The catalysed reaction is [protein]-peptidylproline (omega=180) = [protein]-peptidylproline (omega=0). Its function is as follows. Chaperone involved in the correct folding and assembly of outer membrane proteins. Recognizes specific patterns of aromatic residues and the orientation of their side chains, which are found more frequently in integral outer membrane proteins. May act in both early periplasmic and late outer membrane-associated steps of protein maturation. The polypeptide is Chaperone SurA (Pseudomonas fluorescens (strain Pf0-1)).